The chain runs to 540 residues: Exopolysaccharide phosphotransferase SCO6022 (540 aa).

This sequence belongs to the stealth family.

This Streptomyces coelicolor (strain ATCC BAA-471 / A3(2) / M145) protein is Exopolysaccharide phosphotransferase SCO6022.